The sequence spans 2083 residues: Non-reducing polyketide synthase curS2 (2083 aa).

The segment at L9–H246 is N-terminal acylcarrier protein transacylase domain (SAT). One can recognise a Ketosynthase family 3 (KS3) domain in the interval R366 to D798. Active-site for beta-ketoacyl synthase activity residues include C543, H678, and H717. Residues V895–N1201 are malonyl-CoA:ACP transacylase (MAT) domain. S986 functions as the For acyl/malonyl transferase activity in the catalytic mechanism. Residues A1276 to D1415 form an N-terminal hotdog fold region. The PKS/mFAS DH domain maps to A1276–K1585. The product template (PT) domain stretch occupies residues S1285–R1581. Residues G1437–K1585 are C-terminal hotdog fold. The Carrier domain occupies D1637 to K1714. S1674 is modified (O-(pantetheine 4'-phosphoryl)serine). Positions F1710–A1790 are disordered. A compositionally biased stretch (low complexity) spans S1718–S1736. Residues M1745 to S1754 are compositionally biased toward polar residues. The span at L1771–E1784 shows a compositional bias: basic and acidic residues. Residues M1811–L2058 are thioesterase (TE) domain. The For thioesterase activity role is filled by H2065.

The protein operates within mycotoxin biosynthesis. In terms of biological role, non-reducing polyketide synthase; part of the gene cluster that mediates the biosynthesis of 10,11-dehydrocurvularin, a prevalent fungal phytotoxin with heat shock response and immune-modulatory activities. The highly reducing polyketide synthase curS1 is responsible for biosynthesis up to the tetraketide stage. The non-reducing polyketide synthase curS2 then conducts four additional chain extension cycles, producing the unreduced part of the nascent octaketide from C-1 to C-8 in 10,11-dehydrocurvularin. In Aspergillus terreus, this protein is Non-reducing polyketide synthase curS2.